A 109-amino-acid chain; its full sequence is Nucleoid-associated protein Shal_1591 (109 aa).

A disordered region spans residues 87 to 109 (NQKEKMAEVTGGMQLPPGMKMPF).

Belongs to the YbaB/EbfC family. As to quaternary structure, homodimer.

The protein localises to the cytoplasm. Its subcellular location is the nucleoid. Binds to DNA and alters its conformation. May be involved in regulation of gene expression, nucleoid organization and DNA protection. The chain is Nucleoid-associated protein Shal_1591 from Shewanella halifaxensis (strain HAW-EB4).